Here is a 1360-residue protein sequence, read N- to C-terminus: Zinc finger protein GLI1 (1360 aa).

Residues 198 to 245 form a disordered region; the sequence is DTIGSKRLEDGSEGDISSPASVGTQDPLLGLLDGRDDLEKDDGKHEPE. Residues 230-245 show a composition bias toward basic and acidic residues; the sequence is DGRDDLEKDDGKHEPE. Residues 250-275 form a C2H2-type 1 zinc finger; the sequence is TNCHWESCTKEFDTQEHLVHHINNEH. Positions 298 to 306 are interaction with DNA; sequence KAQYMLVVH. 3 consecutive C2H2-type zinc fingers follow at residues 316-340, 346-371, and 377-402; these read HKCT…LRSH, YVCE…NRTH, and YVCK…KTVH. 2 interaction with DNA regions span residues 360 to 365 and 390 to 396; these read ASDRAK and DPSSLRK. Disordered stretches follow at residues 390–434, 457–500, 718–740, and 1120–1213; these read DPSS…NVKG, ITLK…SFED, IIHP…RTGG, and YMNY…IQPQ. A compositionally biased stretch (low complexity) spans 461 to 473; it reads SQPSPGGQSSCSS. Residues 474 to 496 are compositionally biased toward polar residues; sequence ERSPLGSTNNNDSGVEMNANTGG. The segment covering 1134–1143 has biased composition (low complexity); that stretch reads SPSSQDSQSS. Residues 1173–1190 show a composition bias toward polar residues; sequence RQHSVSSQSTYMGSPNQL.

Belongs to the GLI C2H2-type zinc-finger protein family.

The protein resides in the cytoplasm. The protein localises to the nucleus. Acts as a transcriptional activator. Binds to the DNA consensus sequence 5'-GACCACCCA-3'. May regulate the transcription of specific genes during normal development. Mediates SHH signaling. Plays a role in cell proliferation and differentiation via its role in SHH signaling. This is Zinc finger protein GLI1 (gli1) from Xenopus laevis (African clawed frog).